The following is a 75-amino-acid chain: Chaplin-D (75 aa).

An N-terminal signal peptide occupies residues 1-23 (MKKSAAVVAGAIMALGMAAPAFA). The Chaplin domain occupies 34 to 74 (SPGVLSGNVIQVPVHVPVNVCGNSINVVGLLNPAFGNKCEN). Cysteine 54 and cysteine 72 are disulfide-bonded.

Belongs to the chaplin family. Short chaplin subfamily.

Its subcellular location is the cell surface. It localises to the secreted. It is found in the cell wall. The protein resides in the fimbrium. Its function is as follows. One of 8 partially redundant surface-active proteins required for efficient formation of aerial mycelium; the short chaplins assemble into a hydrophobic, amyloidal fibrillar surface layer that envelopes and protects aerial hyphae and spores, presumably anchored to the long chaplins. Chaplins have an overlapping function with the surface-active SapB peptide; chaplins are essential on minimal medium while on rich medium both chaplins and SapB are required for efficient aerial hyphae formation. Chaplins are also involved in cell attachment to a hydrophobic surface. Forms amyloid fibrils in vitro probably composed of stacked beta-sheets, at low extracellular concentrations individually restores the ability to form aerial hyphae to a chaplin-deficient strain. A small chaplin extract (ChpD, ChpE, ChpF, ChpG and ChpH) self-assembles into 2 different amyloids; small fibrils at the air-water interface form an amphipathic membrane that resembles spore-surface structures involved in aerial hyphae formation, and hydrophilic fibrils in solution that resemble the fibers that attach cells to a hydrophobic surface. At the air-water interface the hydrophilic surface is in contact with water (probably equivalent to the peptidoglycan layer), while the hydrophobic face is exposed to the air, making the surface of the aerial hyphae hydrophobic. A minimal chaplin strain capable of forming aerial mycelium/hyphae on minimal medium contains ChpC, ChpE and ChpH. The strain also has restored rodlet formation on the hyphae surface. A second minimal chaplin strain with ChpA, ChpD and ChpE makes slightly less robust hyphae. A small chaplin extract applied to a chaplin-deficient strain restores aerial hyphae formation. The small chaplin extract forms an amyloid-like structure similar to that seen on the surface of cells without rodlets (rdlA-rdlB deletions), and is highly surface active, reducing surface tension from 72 to 26 mJ/m(2), which probably allows escape of hyphae from an aqueous environment into air. This Streptomyces coelicolor (strain ATCC BAA-471 / A3(2) / M145) protein is Chaplin-D.